The primary structure comprises 136 residues: Active regulator of SIRT1 (136 aa).

Citrulline is present on arginine 7. Residues 13–58 are disordered; that stretch reads LAASEAPRDPPGQAKPRGAPVKRPRKTKAIQAQKLRNSAKGKVPKS. The residue at position 84 (serine 84) is a Phosphoserine.

Belongs to the AROS family. Part of the small subunit (SSU) processome, composed of more than 70 proteins and the RNA chaperone small nucleolar RNA (snoRNA) U3. Interacts with RPS19; the interaction is direct and mediates the integration of RPS19 in state post-A1. Interacts with SIRT1. Citrullinated by PADI4. As to expression, widely expressed (at protein level).

The protein resides in the nucleus. It localises to the nucleolus. Functionally, part of the small subunit (SSU) processome, first precursor of the small eukaryotic ribosomal subunit. During the assembly of the SSU processome in the nucleolus, many ribosome biogenesis factors, an RNA chaperone and ribosomal proteins associate with the nascent pre-rRNA and work in concert to generate RNA folding, modifications, rearrangements and cleavage as well as targeted degradation of pre-ribosomal RNA by the RNA exosome. Acts as a chaperone that specifically mediates the integration of RPS19 in state post-A1. Direct regulator of SIRT1. Enhances SIRT1-mediated deacetylation of p53/TP53, thereby participating in inhibition of p53/TP53-mediated transcriptional activity. The protein is Active regulator of SIRT1 of Homo sapiens (Human).